The chain runs to 432 residues: Transcriptional adapter 3-A (432 aa).

Disordered regions lie at residues 90–127 (HELG…RNMQ) and 275–314 (SPVE…TKSL). Over residues 293-305 (DGASTSPRSQNKP) the composition is skewed to polar residues. Positions 335 to 398 (ADDSEDEVLA…NEVMDAFRKI (64 aa)) form a coiled coil.

Belongs to the NGG1 family.

The protein resides in the nucleus. In terms of biological role, functions as a component of the PCAF complex. The PCAF complex is capable of efficiently acetylating histones in a nucleosomal context. The chain is Transcriptional adapter 3-A (tada3-a) from Xenopus laevis (African clawed frog).